The following is a 150-amino-acid chain: Large ribosomal subunit protein bL9 (150 aa).

Belongs to the bacterial ribosomal protein bL9 family.

In terms of biological role, binds to the 23S rRNA. This Corynebacterium diphtheriae (strain ATCC 700971 / NCTC 13129 / Biotype gravis) protein is Large ribosomal subunit protein bL9.